Consider the following 613-residue polypeptide: DNA polymerase II small subunit (613 aa).

It belongs to the DNA polymerase delta/II small subunit family. Heterodimer of a large subunit and a small subunit.

It catalyses the reaction DNA(n) + a 2'-deoxyribonucleoside 5'-triphosphate = DNA(n+1) + diphosphate. The enzyme catalyses Exonucleolytic cleavage in the 3'- to 5'-direction to yield nucleoside 5'-phosphates.. Functionally, possesses two activities: a DNA synthesis (polymerase) and an exonucleolytic activity that degrades single-stranded DNA in the 3' to 5' direction. Has a template-primer preference which is characteristic of a replicative DNA polymerase. In Pyrococcus furiosus (strain ATCC 43587 / DSM 3638 / JCM 8422 / Vc1), this protein is DNA polymerase II small subunit (polB).